The following is a 494-amino-acid chain: MKNNTTQSLLLLLLFFFFFFEISHSLSISSNAPLSDTEVRFIQRRQLLYYRDEFGDRGENVTVDPSLIFENPRLRSAYIALQAWKQAILSDPNNITVNWIGSNVCNYTGVFCSKALDNRKIRTVAGIDLNHADIAGYLPEELGLLTDLALFHVNSNRFCGTVPHKFKQLKLLFELDLSNNRFAGKFPTVVLHLPSLKFLDLRFNEFEGTVPKELFSKNLDAIFINHNRFRFELPENFGDSPVSVIVLANNHFHGCIPTSLVEMKNLNEIIFMNNGLNSCLPADIGRLKNVTVFDVSFNELVGPLPESVGGMVEVEQLNVAHNLLSGKIPASICQLPKLENFTYSYNFFTGEAPVCLRLSEFDDRRNCLPGRPAQRSSRQCSAFLSRPSVDCGSFGCGRSVVKPSPPIVALPPPPPPSPPLPPPVYSPPPSPPVFSPPPSPPVYSPPPPPSIHYSSPPPPPVHHSSPPPPSPEFEGPLPPVIGVSYASPPPPPFY.

Positions 1–25 (MKNNTTQSLLLLLLFFFFFFEISHS) are cleaved as a signal peptide. Asparagine 60, asparagine 94, and asparagine 106 each carry an N-linked (GlcNAc...) asparagine glycan. LRR repeat units follow at residues 121 to 145 (IRTV…LGLL), 146 to 168 (TDLA…KFKQ), 169 to 193 (LKLL…VLHL), 194 to 217 (PSLK…LFSK), 219 to 240 (LDAI…FGDS), 242 to 263 (VSVI…LVEM), 264 to 287 (KNLN…IGRL), 289 to 311 (NVTV…VGGM), and 312 to 335 (VEVE…ICQL). Asparagine 289 is a glycosylation site (N-linked (GlcNAc...) asparagine). Asparagine 340 carries N-linked (GlcNAc...) asparagine glycosylation. A contains the Ser-Pro(4) repeats region spans residues 404–494 (SPPIVALPPP…YASPPPPPFY (91 aa)). Over residues 422–479 (PPVYSPPPSPPVFSPPPSPPVYSPPPPPSIHYSSPPPPPVHHSSPPPPSPEFEGPLPP) the composition is skewed to pro residues. Residues 422-482 (PPVYSPPPSP…FEGPLPPVIG (61 aa)) form a disordered region.

Post-translationally, hydroxylated on proline residues in the S-P-P-P-P repeat. O-glycosylated on hydroxyprolines. In terms of tissue distribution, expressed in roots, stems, leaves and flowers, mostly in vascular tissues.

It localises to the secreted. The protein localises to the cell wall. Functionally, modulates cell morphogenesis by regulating cell wall formation and assembly, and/or growth polarization. This is Leucine-rich repeat extensin-like protein 4 (LRX4) from Arabidopsis thaliana (Mouse-ear cress).